A 590-amino-acid chain; its full sequence is Aspartate--tRNA(Asp/Asn) ligase (590 aa).

Glu-176 contributes to the L-aspartate binding site. The tract at residues 200–203 (QLFK) is aspartate. L-aspartate-binding residues include Arg-222 and His-451. An ATP-binding site is contributed by 222–224 (RDE). Glu-485 is a binding site for ATP. Arg-492 contributes to the L-aspartate binding site. 537–540 (GIDR) is a binding site for ATP.

Belongs to the class-II aminoacyl-tRNA synthetase family. Type 1 subfamily. Homodimer.

It localises to the cytoplasm. It carries out the reaction tRNA(Asx) + L-aspartate + ATP = L-aspartyl-tRNA(Asx) + AMP + diphosphate. Functionally, aspartyl-tRNA synthetase with relaxed tRNA specificity since it is able to aspartylate not only its cognate tRNA(Asp) but also tRNA(Asn). Reaction proceeds in two steps: L-aspartate is first activated by ATP to form Asp-AMP and then transferred to the acceptor end of tRNA(Asp/Asn). The polypeptide is Aspartate--tRNA(Asp/Asn) ligase (Ehrlichia canis (strain Jake)).